Reading from the N-terminus, the 281-residue chain is Sulfur carrier protein FdhD (281 aa).

Cysteine 117 serves as the catalytic Cysteine persulfide intermediate.

This sequence belongs to the FdhD family.

The protein resides in the cytoplasm. Its function is as follows. Required for formate dehydrogenase (FDH) activity. Acts as a sulfur carrier protein that transfers sulfur from IscS to the molybdenum cofactor prior to its insertion into FDH. This Xanthomonas oryzae pv. oryzae (strain MAFF 311018) protein is Sulfur carrier protein FdhD.